We begin with the raw amino-acid sequence, 348 residues long: D-alanine--D-alanine ligase (348 aa).

Residues 132–334 (KRVLESAGIP…YAELIEELVR (203 aa)) enclose the ATP-grasp domain. 162–217 (EAALSYPVFVKPANMGSSVGISKAESEEELRAAILLALTYDSRILIEQGVLAREIE) provides a ligand contact to ATP. The Mg(2+) site is built by Asp288, Glu301, and Asn303.

The protein belongs to the D-alanine--D-alanine ligase family. The cofactor is Mg(2+). Requires Mn(2+) as cofactor.

Its subcellular location is the cytoplasm. It carries out the reaction 2 D-alanine + ATP = D-alanyl-D-alanine + ADP + phosphate + H(+). The protein operates within cell wall biogenesis; peptidoglycan biosynthesis. Functionally, cell wall formation. The polypeptide is D-alanine--D-alanine ligase (Streptococcus equi subsp. zooepidemicus (strain H70)).